Consider the following 216-residue polypeptide: Transmembrane emp24 domain-containing protein eca (216 aa).

Residues 1–20 (MRDQFISLALMLCILHSACG) form the signal peptide. Residues 21 to 182 (LYFHISETER…FRHTSESTNS (162 aa)) are Lumenal-facing. The GOLD domain maps to 30–126 (RKCFIEEVPD…QLRVHLDIQV (97 aa)). The stretch at 134–164 (ANVAQKEKLTELQLRIRQLLDQVEQITKEQN) forms a coiled coil. A helical membrane pass occupies residues 183–203 (RVLWWSLAQTVVLVCMGFWQM). Topologically, residues 204–216 (RHLKSFFEAKKLV) are cytoplasmic. The short motif at 213–216 (KKLV) is the Prevents secretion from ER element.

It belongs to the EMP24/GP25L family.

The protein resides in the endoplasmic reticulum membrane. Eca and bai are essential, though not redundant, for dorsoventral patterning of the embryo. Specifically required during early embryogenesis for the activity of maternal tkv, while the zygotic tkv is not affected. Involved in Golgi organization. In Drosophila erecta (Fruit fly), this protein is Transmembrane emp24 domain-containing protein eca.